Reading from the N-terminus, the 643-residue chain is 1-deoxy-D-xylulose-5-phosphate synthase (643 aa).

Thiamine diphosphate-binding positions include H78 and 119 to 121 (AHS). D150 serves as a coordination point for Mg(2+). Residues 151 to 152 (GS), N179, Y288, and E370 contribute to the thiamine diphosphate site. Mg(2+) is bound at residue N179.

Belongs to the transketolase family. DXPS subfamily. Homodimer. It depends on Mg(2+) as a cofactor. Requires thiamine diphosphate as cofactor.

The enzyme catalyses D-glyceraldehyde 3-phosphate + pyruvate + H(+) = 1-deoxy-D-xylulose 5-phosphate + CO2. It functions in the pathway metabolic intermediate biosynthesis; 1-deoxy-D-xylulose 5-phosphate biosynthesis; 1-deoxy-D-xylulose 5-phosphate from D-glyceraldehyde 3-phosphate and pyruvate: step 1/1. Functionally, catalyzes the acyloin condensation reaction between C atoms 2 and 3 of pyruvate and glyceraldehyde 3-phosphate to yield 1-deoxy-D-xylulose-5-phosphate (DXP). This Brucella ovis (strain ATCC 25840 / 63/290 / NCTC 10512) protein is 1-deoxy-D-xylulose-5-phosphate synthase.